Consider the following 451-residue polypeptide: Adenylosuccinate synthetase isozyme 2 (451 aa).

Residues 34 to 40 (GDEGKGK) and 62 to 64 (GHT) contribute to the GTP site. Catalysis depends on Asp35, which acts as the Proton acceptor. Residues Asp35 and Gly62 each coordinate Mg(2+). Residue Asp35 participates in substrate binding. Residues 35–38 (DEGK), 60–63 (NAGH), Thr157, Arg171, Asn250, Thr265, and Arg329 contribute to the IMP site. The Proton donor role is filled by His63. 325-331 (VTTGRKR) lines the substrate pocket. Residues Arg331, 357 to 359 (KLD), and 439 to 442 (GVGK) each bind GTP.

Belongs to the adenylosuccinate synthetase family. As to quaternary structure, homodimer. It depends on Mg(2+) as a cofactor.

The protein resides in the cytoplasm. It is found in the mitochondrion. The catalysed reaction is IMP + L-aspartate + GTP = N(6)-(1,2-dicarboxyethyl)-AMP + GDP + phosphate + 2 H(+). The protein operates within purine metabolism; AMP biosynthesis via de novo pathway; AMP from IMP: step 1/2. Inhibited competitively by AMP and IMP and non-competitively by fructose 1,6-bisphosphate. Plays an important role in the de novo pathway and in the salvage pathway of purine nucleotide biosynthesis. Catalyzes the first committed step in the biosynthesis of AMP from IMP. The sequence is that of Adenylosuccinate synthetase isozyme 2 from Gallus gallus (Chicken).